A 657-amino-acid chain; its full sequence is Transketolase (657 aa).

Residue H31 coordinates substrate. Residues H71 and G120–L122 each bind thiamine diphosphate. D158 provides a ligand contact to Mg(2+). Thiamine diphosphate-binding residues include G159 and N188. Residues N188 and I190 each contribute to the Mg(2+) site. H262, R354, and S381 together coordinate substrate. H262 provides a ligand contact to thiamine diphosphate. E408 acts as the Proton donor in catalysis. F434 serves as a coordination point for thiamine diphosphate. Substrate contacts are provided by H458, D466, and R517.

The protein belongs to the transketolase family. In terms of assembly, homodimer. The cofactor is Mg(2+). It depends on Ca(2+) as a cofactor. Requires Mn(2+) as cofactor. Co(2+) is required as a cofactor. Thiamine diphosphate serves as cofactor.

The catalysed reaction is D-sedoheptulose 7-phosphate + D-glyceraldehyde 3-phosphate = aldehydo-D-ribose 5-phosphate + D-xylulose 5-phosphate. The protein operates within carbohydrate biosynthesis; Calvin cycle. Its pathway is carbohydrate degradation; pentose phosphate pathway. Its function is as follows. Catalyzes the transfer of a two-carbon ketol group from a ketose donor to an aldose acceptor, via a covalent intermediate with the cofactor thiamine pyrophosphate. The chain is Transketolase (tklB) from Cereibacter sphaeroides (Rhodobacter sphaeroides).